The primary structure comprises 78 residues: Acyl carrier protein (78 aa).

Residues 2–77 (STIEERVKKI…AAIDYILSHQ (76 aa)) enclose the Carrier domain. An O-(pantetheine 4'-phosphoryl)serine modification is found at Ser37.

It belongs to the acyl carrier protein (ACP) family. 4'-phosphopantetheine is transferred from CoA to a specific serine of apo-ACP by AcpS. This modification is essential for activity because fatty acids are bound in thioester linkage to the sulfhydryl of the prosthetic group.

Its subcellular location is the cytoplasm. It participates in lipid metabolism; fatty acid biosynthesis. Its function is as follows. Carrier of the growing fatty acid chain in fatty acid biosynthesis. The chain is Acyl carrier protein from Tolumonas auensis (strain DSM 9187 / NBRC 110442 / TA 4).